A 291-amino-acid polypeptide reads, in one-letter code: 3-hydroxy-5-phosphonooxypentane-2,4-dione thiolase (291 aa).

K203 acts as the Schiff-base intermediate with substrate in catalysis.

Belongs to the DeoC/FbaB aldolase family. In terms of assembly, homodecamer.

The protein resides in the cytoplasm. The enzyme catalyses dihydroxyacetone phosphate + acetyl-CoA = 3-hydroxy-2,4-dioxopentyl phosphate + CoA. Involved in the degradation of phospho-AI-2, thereby terminating induction of the lsr operon and closing the AI-2 signaling cycle. Catalyzes the transfer of an acetyl moiety from 3-hydroxy-5-phosphonooxypentane-2,4-dione to CoA to form glycerone phosphate and acetyl-CoA. The protein is 3-hydroxy-5-phosphonooxypentane-2,4-dione thiolase of Escherichia coli O139:H28 (strain E24377A / ETEC).